Here is an 88-residue protein sequence, read N- to C-terminus: FXYD domain-containing ion transport regulator 3 (88 aa).

A signal peptide (not cleaved) is located at residues 1-20; sequence MQEVVLSLLVLLAGLPTLDA. Over 1 to 38 the chain is Extracellular; it reads MQEVVLSLLVLLAGLPTLDANDPENKNDPFYYDWYSLR. The helical transmembrane segment at 39 to 59 threads the bilayer; sequence VGGLICAGILCALGIIVLMSG. Over 60 to 88 the chain is Cytoplasmic; that stretch reads KCKCKFRQKPSHRPGEGPPLITPGSAHNC. A disordered region spans residues 67–88; that stretch reads QKPSHRPGEGPPLITPGSAHNC.

The protein belongs to the FXYD family. In terms of assembly, regulatory subunit of the sodium/potassium-transporting ATPase which is composed of a catalytic alpha subunit, a non-catalytic beta subunit and an additional regulatory subunit. Interacts with catalytic alpha subunit ATP1A1. Also interacts with non-catalytic beta subunit ATP1B1. Interacts with the ATP1A1-ATP1B1, ATP1A2-ATP1B1 and ATP1A3-ATP1B1 NKA isozymes. Post-translationally, glutathionylated. As to expression, expressed at high levels in heart, skeletal muscle and liver with low levels of expression in breast, brain, lung, stomach and colon. In the gastric gland, mainly expressed in the mucus cells forming the upper part of the gland and is absent from the parietal cells.

It is found in the cell membrane. In terms of biological role, associates with and regulates the activity of the sodium/potassium-transporting ATPase (NKA) which transports Na(+) out of the cell and K(+) into the cell. Reduces glutathionylation of the NKA beta-1 subunit ATP1B1, thus reversing glutathionylation-mediated inhibition of ATP1B1. Induces a hyperpolarization-activated chloride current when expressed in Xenopus oocytes. The chain is FXYD domain-containing ion transport regulator 3 (Fxyd3) from Mus musculus (Mouse).